The primary structure comprises 1655 residues: Protein scribble homolog (1655 aa).

Residues 1–818 are sufficient for targeting to adherens junction and to inhibit cell proliferation; that stretch reads MLKCIPLWRC…MRVWRERMVE (818 aa). Residue Ser37 is modified to Phosphoserine. LRR repeat units lie at residues 37–58, 60–81, 83–104, 106–127, 129–150, 152–174, 175–197, 198–219, 221–243, 244–265, 267–288, 290–312, 313–334, 336–357, 359–381, and 382–402; these read SLEELLLDANQLRELPKPFFRL, NLRKLGLSDNEIQRLPPEVANF, QLVELDVSRNDIPEIPESIKFC, ALEIADFSGNPLSRLPDGFTQL, SLAHLALNDVSLQALPGDVGNL, NLVTLELRENLLKSLPASLSFLV, KLEQLDLGGNDLEVLPDTLGALP, NLRELWLDRNQLSALPPELGNL, RLVCLDVSENRLEELPAELGGLV, LLTDLLLSQNLLRRLPDGIGQL, QLSILKVDQNRLCEVTEAIGDC, NLSELILTENLLMALPRSLGKLT, KLTNLNVDRNHLEALPPEIGGC, ALSVLSLRDNRLAVLPPELAHT, ELHVLDVAGNRLQSLPFALTHLN, and LKALWLAENQAQPMLRFQTED. The residue at position 378 (Thr378) is a Phosphothreonine. Disordered stretches follow at residues 417 to 440, 459 to 606, and 628 to 702; these read PQQPPPSLEDAGQQGSLSETWSDA, DAEE…IRKD, and LLQG…VSAP. Residues 458–474 adopt a coiled-coil conformation; the sequence is EDAEEAAAEKRGLQRRA. Phosphothreonine is present on Thr475. The segment covering 479–494 has biased composition (basic and acidic residues); that stretch reads SELKVMKRSIEGRRSE. Ser504 bears the Phosphoserine mark. A compositionally biased stretch (low complexity) spans 537–555; it reads EGPSAEAQGGSQQEATTAG. Composition is skewed to acidic residues over residues 556–565 and 660–694; these read GEEDAEEDYQ and EEEEEEEGSPQEEEEEEEEENRAEEEEASTEEEDK. A coiled-coil region spans residues 656 to 701; it reads RAQKEEEEEEEGSPQEEEEEEEEENRAEEEEASTEEEDKEGAVVSA. Residue Ser688 is modified to Phosphoserine. Thr689 carries the phosphothreonine modification. Residues Ser708 and Ser764 each carry the phosphoserine modification. Residues 717–1229 are interaction with ARHGEF7; the sequence is IEPARIEEEE…SLESISSIDR (513 aa). The region spanning 728–815 is the PDZ 1 domain; that stretch reads TLTILRQTGG…AVQMRVWRER (88 aa). Positions 728–1194 are required for interaction with VIM; it reads TLTILRQTGG…TVLVCDGFEA (467 aa). Position 826 is a phosphothreonine (Thr826). The tract at residues 827–853 is disordered; sequence PLRPEDDYSPRERRGGGLRLPLLPPES. The span at 829–841 shows a compositional bias: basic and acidic residues; the sequence is RPEDDYSPRERRG. 4 positions are modified to phosphoserine: Ser835, Ser853, Ser875, and Ser939. PDZ domains lie at 862–950, 1004–1093, and 1100–1194; these read VACL…EREA, EIRL…RRDP, and ELCI…GFEA. The interval 1105-1117 is interaction with tick-borne encephalitis virus RNA-directed RNA polymerase NS5; the sequence is KAPGERLGISIRG. Ser1140, Ser1220, Ser1223, Ser1226, Ser1232, Ser1276, Ser1279, Ser1295, Ser1298, Ser1306, and Ser1309 each carry phosphoserine. Basic and acidic residues predominate over residues 1227-1242; it reads IDRELSPEGPGKEKEL. Positions 1227 to 1246 are disordered; the sequence is IDRELSPEGPGKEKELPGQT. The interval 1277–1489 is disordered; sequence AGSVQRVPSG…APERALSPAE (213 aa). Over residues 1302-1311 the composition is skewed to pro residues; that stretch reads QQPPSPPSPD. Thr1342 carries the post-translational modification Phosphothreonine. Ser1348 bears the Phosphoserine mark. Positions 1353 to 1365 are enriched in basic and acidic residues; it reads SFRERQKYFELEV. Ser1378 carries the phosphoserine modification. Residues 1379–1419 adopt a coiled-coil conformation; that stretch reads LVGADDLRKMQEEEARKLQQKRAQMLREAAEAGAEARLALD. Residues 1383–1395 show a composition bias toward basic and acidic residues; it reads DDLRKMQEEEARK. Low complexity predominate over residues 1409–1421; sequence EAGAEARLALDGE. Residues 1422–1432 show a composition bias toward acidic residues; sequence TLGEEEQEDEQ. Ser1437, Ser1445, and Ser1448 each carry phosphoserine. The span at 1461–1472 shows a compositional bias: basic and acidic residues; it reads AKAERRHQERLR. A phosphoserine mark is found at Ser1475, Ser1486, and Ser1508. The segment at 1520–1568 is disordered; the sequence is LSRSQEGRGTRGPLERLAEAPSPAPTPSPTPVEDLGPQTSTSPGRLPLS. Residues 1524 to 1537 are compositionally biased toward basic and acidic residues; the sequence is QEGRGTRGPLERLA. Ser1541 is modified (phosphoserine). The residue at position 1545 (Thr1545) is a Phosphothreonine. Phosphoserine is present on residues Ser1547, Ser1561, and Ser1591. Residues 1622–1655 form a disordered region; the sequence is GRPSPGAVGPEDVALCSSRRPVRPGRRGLGPVPS.

It belongs to the LAP (LRR and PDZ) protein family. Interacts with UBE3A. Interacts with PAK1 and PAK2. Interacts (via PDZ domains) with VANGL2. Interacts (via PDZ domains) with LPP and TRIP6; the interaction is direct. Interacts (via PDZ domains) with TJP2. Interacts (via PDZ domains) with APC; may mediate APC targeting to adherens junctions of epithelial cells. Interacts (via PDZ domains) with TSHR; regulates TSHR trafficking and function. Interacts with ARHGEF7 and GIT1; interacts directly with ARHGEF7. Interacts with CTNNB1. Interacts with MAPK12. Interacts (via PDZ domains 1 and 3) with MCC. Interacts with DLG5. Interacts with STK4/MST1 and LATS1 in the presence of DLG5. Interacts (via PDZ domain 3) with CRTAM (via PDZ-binding motif); the interaction promotes CRTAM and SCRIB polarization in a subset of CD4+ T-cells. Interacts with YES1, when YES1 is in a closed conformation; the interaction facilitates YES1 autophosphorylation. Interacts (via PDZ domains) with VIM; the interaction protects SCRIB from proteasomal degradation and facilitates SCRIB localization to intermediate filaments, the interaction is reduced by cell contact inhibition. As to quaternary structure, (Microbial infection) Interacts (via fourth PDZ domain) with tick-borne encephalitis virus RNA-directed RNA polymerase NS5; this interaction targets viral NS5 to the cell membrane periphery and nucleus and prevents STAT1 phosphorylation, and thus, the activation of the JAK-STAT signaling pathway. Interacts with HPV E6. Interacts with influenza A virus protein NS1; the interaction results in the translocation of SCRIB from the cell membrane to perinuclear puncta. In terms of processing, ubiquitinated; targeted for UBE3A-dependent multiubiquitination in the presence of high-risk HPV E6 proteins and degraded. Palmitoylated. Could be depalmitoylated by LYPLA1 and/or LYPLA2. Palmitoylation of SCRIB by ZDHHC7 is required for its localization to cell-cell junctions, function in the establishement of epithelial cell polarity and the regulation of downstream signaling pathways important for epithelial cell differentiation. As to expression, expressed in kidney, skeletal muscles, liver, lung, breast, intestine, placenta and skin mainly in epithelial cells (at protein level).

It is found in the cell membrane. Its subcellular location is the cell junction. The protein localises to the adherens junction. It localises to the cell projection. The protein resides in the lamellipodium. It is found in the cytoplasm. Its subcellular location is the postsynapse. The protein localises to the presynapse. In terms of biological role, scaffold protein involved in different aspects of polarized cell differentiation regulating epithelial and neuronal morphogenesis and T-cell polarization. Via its interaction with CRTAM, required for the late phase polarization of a subset of CD4+ T-cells, which in turn regulates TCR-mediated proliferation and IFNG and IL22 production. Plays a role in cell directional movement, cell orientation, cell sheet organization and Golgi complex polarization at the cell migration front. Promotes epithelial cell layer barrier function via maintaining cell-cell adhesion. Most probably functions in the establishment of apico-basal cell polarity. May function in cell proliferation regulating progression from G1 to S phase and as a positive regulator of apoptosis for instance during acinar morphogenesis of the mammary epithelium. May regulate cell invasion via MAPK-mediated cell migration and adhesion. May play a role in exocytosis and in the targeting of synaptic vesicles to synapses. Functions as an activator of Rac GTPase activity. In Homo sapiens (Human), this protein is Protein scribble homolog.